Reading from the N-terminus, the 333-residue chain is MTHSPSFLQHALSSSDTRAEWPLPGGLAARWLAPGCVELNGDARGADSVLLSCGVHGNETAPIEVVDGMLTDIAAGQLALNCRLLVMFANLDAIRQGVRYGNYDMNRLFNGAHARHPELPESVRAAELETLAAEFFAGARARKLHYDLHTAIRGSVFEKFAIYPFLHDGRTHKREQLAWLQRCGIEAVLLHTQPANTFSYFTSQYCEADAFTLELGKARPFGQNDLSRFSGIDGALRGLLSNPQANVPDLDEDKLPLFRAKYDLVKHSEAFKLNLADSVENFTLLPDGMLIAEDGAVRYQATGGEERILFPNPAVKPGLRAGIVVEPARLPSR.

3 residues coordinate Zn(2+): H56, E59, and H149. The active site involves E214.

The protein belongs to the AspA/AstE family. Succinylglutamate desuccinylase subfamily. Requires Zn(2+) as cofactor.

The enzyme catalyses N-succinyl-L-glutamate + H2O = L-glutamate + succinate. The protein operates within amino-acid degradation; L-arginine degradation via AST pathway; L-glutamate and succinate from L-arginine: step 5/5. Functionally, transforms N(2)-succinylglutamate into succinate and glutamate. This Chromobacterium violaceum (strain ATCC 12472 / DSM 30191 / JCM 1249 / CCUG 213 / NBRC 12614 / NCIMB 9131 / NCTC 9757 / MK) protein is Succinylglutamate desuccinylase.